The chain runs to 98 residues: Co-chaperonin GroES (98 aa).

It belongs to the GroES chaperonin family. As to quaternary structure, heptamer of 7 subunits arranged in a ring. Interacts with the chaperonin GroEL.

The protein resides in the cytoplasm. Its function is as follows. Together with the chaperonin GroEL, plays an essential role in assisting protein folding. The GroEL-GroES system forms a nano-cage that allows encapsulation of the non-native substrate proteins and provides a physical environment optimized to promote and accelerate protein folding. GroES binds to the apical surface of the GroEL ring, thereby capping the opening of the GroEL channel. This Neorickettsia sennetsu (strain ATCC VR-367 / Miyayama) (Ehrlichia sennetsu) protein is Co-chaperonin GroES.